A 388-amino-acid chain; its full sequence is Bifunctional enzyme IspD/IspF (388 aa).

A 2-C-methyl-D-erythritol 4-phosphate cytidylyltransferase region spans residues 1-228 (MRIAALLLAA…GVIDRNLLPR (228 aa)). The tract at residues 228–388 (RVGLGYDVHA…SIMVPDNGEA (161 aa)) is 2-C-methyl-D-erythritol 2,4-cyclodiphosphate synthase. The a divalent metal cation site is built by Asp-234 and His-236. Residues 234 to 236 (DVH) and 260 to 261 (HS) contribute to the 4-CDP-2-C-methyl-D-erythritol 2-phosphate site. A divalent metal cation is bound at residue His-268. Residues 282–284 (DIG), 358–361 (TTSE), Phe-365, and Arg-368 contribute to the 4-CDP-2-C-methyl-D-erythritol 2-phosphate site.

The protein in the N-terminal section; belongs to the IspD/TarI cytidylyltransferase family. IspD subfamily. In the C-terminal section; belongs to the IspF family. A divalent metal cation is required as a cofactor.

It catalyses the reaction 2-C-methyl-D-erythritol 4-phosphate + CTP + H(+) = 4-CDP-2-C-methyl-D-erythritol + diphosphate. The catalysed reaction is 4-CDP-2-C-methyl-D-erythritol 2-phosphate = 2-C-methyl-D-erythritol 2,4-cyclic diphosphate + CMP. Its pathway is isoprenoid biosynthesis; isopentenyl diphosphate biosynthesis via DXP pathway; isopentenyl diphosphate from 1-deoxy-D-xylulose 5-phosphate: step 2/6. The protein operates within isoprenoid biosynthesis; isopentenyl diphosphate biosynthesis via DXP pathway; isopentenyl diphosphate from 1-deoxy-D-xylulose 5-phosphate: step 4/6. Bifunctional enzyme that catalyzes the formation of 4-diphosphocytidyl-2-C-methyl-D-erythritol from CTP and 2-C-methyl-D-erythritol 4-phosphate (MEP) (IspD), and catalyzes the conversion of 4-diphosphocytidyl-2-C-methyl-D-erythritol 2-phosphate (CDP-ME2P) to 2-C-methyl-D-erythritol 2,4-cyclodiphosphate (ME-CPP) with a corresponding release of cytidine 5-monophosphate (CMP) (IspF). This chain is Bifunctional enzyme IspD/IspF, found in Gluconobacter oxydans (strain 621H) (Gluconobacter suboxydans).